Here is a 131-residue protein sequence, read N- to C-terminus: Flagellar assembly factor FliW (131 aa).

The protein belongs to the FliW family. As to quaternary structure, interacts with translational regulator CsrA and flagellin(s).

Its subcellular location is the cytoplasm. In terms of biological role, acts as an anti-CsrA protein, binds CsrA and prevents it from repressing translation of its target genes, one of which is flagellin. Binds to flagellin and participates in the assembly of the flagellum. In Campylobacter lari (strain RM2100 / D67 / ATCC BAA-1060), this protein is Flagellar assembly factor FliW.